The chain runs to 224 residues: Holliday junction branch migration complex subunit RuvA (224 aa).

A domain I region spans residues 1–64 (MIGRLSGVLV…EDLLQLYGFP (64 aa)). The segment at 65–143 (TLLEKEWHRL…EVMAMGGTLE (79 aa)) is domain II. Residues 144 to 171 (AALDGVIEDGMAASEGIEPPSAARPAVP) form a flexible linker region. Residues 172 to 224 (SAASDQAGALSALVNLGYGQGEAASAVATAAGEGAVGETDIIRAALRLLAPKG) form a domain III region.

It belongs to the RuvA family. As to quaternary structure, homotetramer. Forms an RuvA(8)-RuvB(12)-Holliday junction (HJ) complex. HJ DNA is sandwiched between 2 RuvA tetramers; dsDNA enters through RuvA and exits via RuvB. An RuvB hexamer assembles on each DNA strand where it exits the tetramer. Each RuvB hexamer is contacted by two RuvA subunits (via domain III) on 2 adjacent RuvB subunits; this complex drives branch migration. In the full resolvosome a probable DNA-RuvA(4)-RuvB(12)-RuvC(2) complex forms which resolves the HJ.

It localises to the cytoplasm. Functionally, the RuvA-RuvB-RuvC complex processes Holliday junction (HJ) DNA during genetic recombination and DNA repair, while the RuvA-RuvB complex plays an important role in the rescue of blocked DNA replication forks via replication fork reversal (RFR). RuvA specifically binds to HJ cruciform DNA, conferring on it an open structure. The RuvB hexamer acts as an ATP-dependent pump, pulling dsDNA into and through the RuvAB complex. HJ branch migration allows RuvC to scan DNA until it finds its consensus sequence, where it cleaves and resolves the cruciform DNA. This chain is Holliday junction branch migration complex subunit RuvA, found in Dinoroseobacter shibae (strain DSM 16493 / NCIMB 14021 / DFL 12).